The sequence spans 65 residues: Sec-independent protein translocase protein TatA (65 aa).

Residues 9-29 traverse the membrane as a helical segment; it reads ILIIVLLVVVVFGIGKLPQVG. Positions 43–65 are disordered; it reads SSGEEEKEEVETKEETKTIEKSE. The segment covering 45–54 has biased composition (acidic residues); that stretch reads GEEEKEEVET. A compositionally biased stretch (basic and acidic residues) spans 55–65; the sequence is KEETKTIEKSE.

This sequence belongs to the TatA/E family. Forms a complex with TatC.

The protein resides in the cell membrane. Part of the twin-arginine translocation (Tat) system that transports large folded proteins containing a characteristic twin-arginine motif in their signal peptide across membranes. TatA could form the protein-conducting channel of the Tat system. The polypeptide is Sec-independent protein translocase protein TatA (Dehalococcoides mccartyi (strain ATCC BAA-2266 / KCTC 15142 / 195) (Dehalococcoides ethenogenes (strain 195))).